Reading from the N-terminus, the 313-residue chain is Small ribosomal subunit protein uS2 (313 aa).

Residues 281 to 301 form a disordered region; it reads AAPAAPAVEPAPEAAQEATAE.

It belongs to the universal ribosomal protein uS2 family.

In Caulobacter sp. (strain K31), this protein is Small ribosomal subunit protein uS2.